Reading from the N-terminus, the 70-residue chain is Omega-conotoxin-like Bu1 (70 aa).

Positions 1–22 are cleaved as a signal peptide; the sequence is MKLTCVAIVAVLLLTACQLITA. The propeptide occupies 23–45; sequence EDSRGTQLHRALRKTTKLSVSTR. Intrachain disulfides connect C46–C61, C53–C65, and C60–C70.

Belongs to the conotoxin O1 superfamily. As to expression, expressed by the venom duct.

It localises to the secreted. Omega-conotoxins act at presynaptic membranes, they bind and block voltage-gated calcium channels (Cav). The protein is Omega-conotoxin-like Bu1 of Conus bullatus (Bubble cone).